We begin with the raw amino-acid sequence, 218 residues long: Protein-methionine-sulfoxide reductase heme-binding subunit MsrQ (218 aa).

A run of 5 helical transmembrane segments spans residues 12–32, 82–102, 118–138, 150–170, and 180–200; these read TLIK…LALF, MLGL…LWFD, PFIT…ITST, WQWL…HYWW, and QPII…FWAW.

Belongs to the MsrQ family. Heterodimer of a catalytic subunit (MsrP) and a heme-binding subunit (MsrQ). FMN is required as a cofactor. The cofactor is heme b.

The protein resides in the cell inner membrane. Its function is as follows. Part of the MsrPQ system that repairs oxidized periplasmic proteins containing methionine sulfoxide residues (Met-O), using respiratory chain electrons. Thus protects these proteins from oxidative-stress damage caused by reactive species of oxygen and chlorine generated by the host defense mechanisms. MsrPQ is essential for the maintenance of envelope integrity under bleach stress, rescuing a wide series of structurally unrelated periplasmic proteins from methionine oxidation. MsrQ provides electrons for reduction to the reductase catalytic subunit MsrP, using the quinone pool of the respiratory chain. This chain is Protein-methionine-sulfoxide reductase heme-binding subunit MsrQ, found in Herminiimonas arsenicoxydans.